A 167-amino-acid polypeptide reads, in one-letter code: Multifunctional Ser/Thr-tRNA deacylase ProXp-y (167 aa).

It is found in the cytoplasm. The catalysed reaction is L-seryl-tRNA(Lys) + H2O = tRNA(Lys) + L-serine. It carries out the reaction L-threonyl-tRNA(Lys) + H2O = tRNA(Lys) + L-threonine. The enzyme catalyses L-homoseryl-tRNA(Lys) + H2O = tRNA(Lys) + L-homoserine + H(+). It catalyses the reaction L-seryl-tRNA(Ala) + H2O = tRNA(Ala) + L-serine. The catalysed reaction is L-homoseryl-tRNA(Ser) + H2O = tRNA(Ser) + L-homoserine + H(+). It carries out the reaction L-seryl-tRNA(Thr) + H2O = tRNA(Thr) + L-serine. The enzyme catalyses L-threonyl-tRNA(Ile) + H2O = tRNA(Ile) + L-threonine. It catalyses the reaction L-threonyl-tRNA(Val) + H2O = tRNA(Val) + L-threonine. The catalysed reaction is L-threonyl-tRNA(Ser) + H2O = tRNA(Ser) + L-threonine. Functionally, an aminoacyl-tRNA editing enzyme that deacylates Ser-tRNA and/or Thr-tRNA mischarged by lysyl-tRNA synthetase (LysRS), threonyl-tRNA synthetase (ThrRS), seryl-tRNA synthetase (SerRS), alanyl-tRNA synthetase (AlaRS), valyl-tRNA synthetase (ValRS) and isoleucyl-tRNA synthetase (IleRS) in vitro. Also deacylates mischarged Hse-tRNA(Lys) and Hse-tRNA(Ser), and cognate Ser-tRNA(Ser) and Thr-tRNA(Thr) in vitro. The presence of cognate ThrRS abolishes the Thr-tRNA(Thr) deacylase activity, hence this activity is not applicable physiologically. Not able to remove the amino acid moiety from cognate Val-tRNA(Val), Ile-tRNA(Ile), Lys-tRNA(Lys), Ala-tRNA(Ala) or Pro-tRNA(Pro), or from incorrectly charged Ala-tRNA(Pro), Cys-tRNA(Pro) or Leu-tRNA(Pro) in vitro. May be required in vivo to prevent mistranslation and to maintain growth when the error prone stress-inducible lysyl-tRNA synthetase (LysU) is expressed under environmental pressure. This is Multifunctional Ser/Thr-tRNA deacylase ProXp-y from Escherichia coli O157:H7.